We begin with the raw amino-acid sequence, 132 residues long: UPF0299 membrane protein YohJ (132 aa).

4 consecutive transmembrane segments (helical) span residues 5–25 (LNIIWQYLRAFVLIYACLYAG), 26–46 (IFIASLLPVTIPGSIIGMLIL), 63–83 (GCYVLIRYMALLFVPIGVGVM), and 93–113 (FGPVVVSCAVSTLVVFLVVSW).

The protein belongs to the UPF0299 family.

It localises to the cell inner membrane. In Shigella flexneri serotype 5b (strain 8401), this protein is UPF0299 membrane protein YohJ.